A 313-amino-acid polypeptide reads, in one-letter code: tRNA dimethylallyltransferase (313 aa).

17–24 contacts ATP; sequence GPTASGKT. A substrate-binding site is contributed by 19–24; that stretch reads TASGKT. 3 interaction with substrate tRNA regions span residues 42-45, 166-170, and 247-252; these read DSAL, QRLSR, and RCVGYR.

It belongs to the IPP transferase family. In terms of assembly, monomer. Requires Mg(2+) as cofactor.

It catalyses the reaction adenosine(37) in tRNA + dimethylallyl diphosphate = N(6)-dimethylallyladenosine(37) in tRNA + diphosphate. Functionally, catalyzes the transfer of a dimethylallyl group onto the adenine at position 37 in tRNAs that read codons beginning with uridine, leading to the formation of N6-(dimethylallyl)adenosine (i(6)A). The polypeptide is tRNA dimethylallyltransferase (Pectobacterium atrosepticum (strain SCRI 1043 / ATCC BAA-672) (Erwinia carotovora subsp. atroseptica)).